Here is a 118-residue protein sequence, read N- to C-terminus: MKNRYIQQFEDAQLKDKVMPQFKAGDTLRLGITIKEGEKTRTQYFEGVCIAIRGNGVDKTFRVRKMGANNIGVEKIFPFYSESLASVEVLRVGRVRRAKLYYLRDRRGKAARIKEIRH.

It belongs to the bacterial ribosomal protein bL19 family.

This protein is located at the 30S-50S ribosomal subunit interface and may play a role in the structure and function of the aminoacyl-tRNA binding site. The protein is Large ribosomal subunit protein bL19 of Helicobacter acinonychis (strain Sheeba).